The chain runs to 311 residues: Methionyl-tRNA formyltransferase (311 aa).

A (6S)-5,6,7,8-tetrahydrofolate-binding site is contributed by Ser-112 to Pro-115.

This sequence belongs to the Fmt family.

The enzyme catalyses L-methionyl-tRNA(fMet) + (6R)-10-formyltetrahydrofolate = N-formyl-L-methionyl-tRNA(fMet) + (6S)-5,6,7,8-tetrahydrofolate + H(+). In terms of biological role, attaches a formyl group to the free amino group of methionyl-tRNA(fMet). The formyl group appears to play a dual role in the initiator identity of N-formylmethionyl-tRNA by promoting its recognition by IF2 and preventing the misappropriation of this tRNA by the elongation apparatus. This is Methionyl-tRNA formyltransferase from Bartonella henselae (strain ATCC 49882 / DSM 28221 / CCUG 30454 / Houston 1) (Rochalimaea henselae).